Consider the following 908-residue polypeptide: AdoMet-dependent rRNA methyltransferase SPB1 (908 aa).

5 residues coordinate S-adenosyl-L-methionine: G57, W59, D77, D93, and D118. K158 acts as the Proton acceptor in catalysis. The stretch at 378–422 (MDEEEQITEELQKLQQAKLAKTKRERKRANEKKARELLKLQLNMT) forms a coiled coil. Disordered stretches follow at residues 440 to 513 (IFDL…YDSY), 535 to 715 (NFDA…DEVK), and 806 to 841 (AKGRKKMKAVARMEKAKKKADGVMESEEMGDGEKAR). Residues 464 to 493 (DDGEGMDLASESEEEEDEDEEDDEVLDSDE) show a composition bias toward acidic residues. Positions 535–545 (NFDAWHGIQEK) are enriched in basic and acidic residues. 2 stretches are compositionally biased toward acidic residues: residues 546-564 (SDEEGSDDDDGQDDDEEGG) and 579-591 (DSSDSDSDAEPET). Residues 592-610 (EVPKKIKKVSFEKPARSEK) show a composition bias toward basic and acidic residues. Acidic residues-rich tracts occupy residues 650-678 (DGDDEEEEEEDESEEEESDDEDVDMEDAS) and 685-712 (EGDDDFEIVPQAPEDDGPEWDVDDEDQD). Positions 816 to 827 (ARMEKAKKKADG) are enriched in basic and acidic residues.

It belongs to the class I-like SAM-binding methyltransferase superfamily. RNA methyltransferase RlmE family. SPB1 subfamily. In terms of assembly, component of the nucleolar and nucleoplasmic pre-60S ribosomal particle.

It is found in the nucleus. It localises to the nucleolus. It catalyses the reaction a ribonucleotide in rRNA + S-adenosyl-L-methionine = a 2'-O-methylribonucleotide in rRNA + S-adenosyl-L-homocysteine + H(+). Functionally, required for proper assembly of pre-ribosomal particles during the biogenesis of the 60S ribosomal subunit. The protein is AdoMet-dependent rRNA methyltransferase SPB1 of Cryptococcus neoformans var. neoformans serotype D (strain B-3501A) (Filobasidiella neoformans).